We begin with the raw amino-acid sequence, 215 residues long: Probable phosphoglycerate mutase GpmB (215 aa).

Substrate-binding positions include 8-15, 21-22, Arg58, Lys60, 82-85, 104-105, and 151-152; these read RHGETQWN, QG, ELDM, RR, and GI. His9 acts as the Tele-phosphohistidine intermediate in catalysis. Glu82 functions as the Proton donor/acceptor in the catalytic mechanism.

Belongs to the phosphoglycerate mutase family. GpmB subfamily.

The catalysed reaction is (2R)-2-phosphoglycerate = (2R)-3-phosphoglycerate. It participates in carbohydrate degradation; glycolysis; pyruvate from D-glyceraldehyde 3-phosphate: step 3/5. This is Probable phosphoglycerate mutase GpmB from Salmonella paratyphi C (strain RKS4594).